Reading from the N-terminus, the 370-residue chain is Integrin-linked kinase-associated serine/threonine phosphatase 2C (370 aa).

Met1 is modified (N-acetylmethionine). A disordered region spans residues 1 to 69 (MDLFGDLPEP…SDEEKNGSEE (69 aa)). The residue at position 13 (Ser13) is a Phosphoserine. Residues 33–45 (SSGDSGSLDTSLS) are compositionally biased toward low complexity. Residues 46–69 (EEVKNEGKGAKRKASDEEKNGSEE) are compositionally biased toward basic and acidic residues. In terms of domain architecture, PPM-type phosphatase spans 86-368 (KGYVAERKGE…DNVTVMVVRI (283 aa)). Residues Asp130 and Gly131 each coordinate Mn(2+). Lys188 bears the N6-acetyllysine mark. Positions 304 and 359 each coordinate Mn(2+).

It belongs to the PP2C family. As to quaternary structure, interacts with ILK. Mg(2+) is required as a cofactor. Mn(2+) serves as cofactor.

It localises to the cytoplasm. The enzyme catalyses O-phospho-L-seryl-[protein] + H2O = L-seryl-[protein] + phosphate. It catalyses the reaction O-phospho-L-threonyl-[protein] + H2O = L-threonyl-[protein] + phosphate. Protein phosphatase that may play a role in regulation of cell cycle progression via dephosphorylation of its substrates whose appropriate phosphorylation states might be crucial for cell proliferation. Selectively associates with integrin linked kinase (ILK), to modulate cell adhesion and growth factor signaling. Inhibits the ILK-GSK3B signaling axis and may play an important role in inhibiting oncogenic transformation. The chain is Integrin-linked kinase-associated serine/threonine phosphatase 2C (ILKAP) from Bos taurus (Bovine).